A 95-amino-acid polypeptide reads, in one-letter code: Aspartyl/glutamyl-tRNA(Asn/Gln) amidotransferase subunit C (95 aa).

The protein belongs to the GatC family. In terms of assembly, heterotrimer of A, B and C subunits.

The enzyme catalyses L-glutamyl-tRNA(Gln) + L-glutamine + ATP + H2O = L-glutaminyl-tRNA(Gln) + L-glutamate + ADP + phosphate + H(+). The catalysed reaction is L-aspartyl-tRNA(Asn) + L-glutamine + ATP + H2O = L-asparaginyl-tRNA(Asn) + L-glutamate + ADP + phosphate + 2 H(+). In terms of biological role, allows the formation of correctly charged Asn-tRNA(Asn) or Gln-tRNA(Gln) through the transamidation of misacylated Asp-tRNA(Asn) or Glu-tRNA(Gln) in organisms which lack either or both of asparaginyl-tRNA or glutaminyl-tRNA synthetases. The reaction takes place in the presence of glutamine and ATP through an activated phospho-Asp-tRNA(Asn) or phospho-Glu-tRNA(Gln). The polypeptide is Aspartyl/glutamyl-tRNA(Asn/Gln) amidotransferase subunit C (Desulforapulum autotrophicum (strain ATCC 43914 / DSM 3382 / VKM B-1955 / HRM2) (Desulfobacterium autotrophicum)).